We begin with the raw amino-acid sequence, 779 residues long: Phosphoribosylformylglycinamidine synthase subunit PurL (779 aa).

His52 is a catalytic residue. The ATP site is built by Tyr55 and Lys94. Residue Glu96 coordinates Mg(2+). Residues 97-100 (SHNH) and Arg119 each bind substrate. His98 functions as the Proton acceptor in the catalytic mechanism. Residue Asp120 coordinates Mg(2+). Gln243 is a binding site for substrate. Asp271 serves as a coordination point for Mg(2+). 315–317 (ESQ) serves as a coordination point for substrate. ATP-binding residues include Asn523 and Gly560. Asn561 lines the Mg(2+) pocket. Ser563 contacts substrate.

The protein belongs to the FGAMS family. In terms of assembly, monomer. Part of the FGAM synthase complex composed of 1 PurL, 1 PurQ and 2 PurS subunits.

The protein resides in the cytoplasm. The catalysed reaction is N(2)-formyl-N(1)-(5-phospho-beta-D-ribosyl)glycinamide + L-glutamine + ATP + H2O = 2-formamido-N(1)-(5-O-phospho-beta-D-ribosyl)acetamidine + L-glutamate + ADP + phosphate + H(+). The protein operates within purine metabolism; IMP biosynthesis via de novo pathway; 5-amino-1-(5-phospho-D-ribosyl)imidazole from N(2)-formyl-N(1)-(5-phospho-D-ribosyl)glycinamide: step 1/2. In terms of biological role, part of the phosphoribosylformylglycinamidine synthase complex involved in the purines biosynthetic pathway. Catalyzes the ATP-dependent conversion of formylglycinamide ribonucleotide (FGAR) and glutamine to yield formylglycinamidine ribonucleotide (FGAM) and glutamate. The FGAM synthase complex is composed of three subunits. PurQ produces an ammonia molecule by converting glutamine to glutamate. PurL transfers the ammonia molecule to FGAR to form FGAM in an ATP-dependent manner. PurS interacts with PurQ and PurL and is thought to assist in the transfer of the ammonia molecule from PurQ to PurL. The sequence is that of Phosphoribosylformylglycinamidine synthase subunit PurL from Prochlorococcus marinus subsp. pastoris (strain CCMP1986 / NIES-2087 / MED4).